The following is a 314-amino-acid chain: Formimidoylglutamase (314 aa).

6 residues coordinate Mn(2+): His-127, Asp-151, His-153, Asp-155, Asp-239, and Asp-241.

Belongs to the arginase family. The cofactor is Mn(2+).

The catalysed reaction is N-formimidoyl-L-glutamate + H2O = formamide + L-glutamate. It functions in the pathway amino-acid degradation; L-histidine degradation into L-glutamate; L-glutamate from N-formimidoyl-L-glutamate (hydrolase route): step 1/1. In terms of biological role, catalyzes the conversion of N-formimidoyl-L-glutamate to L-glutamate and formamide. The sequence is that of Formimidoylglutamase from Corynebacterium efficiens (strain DSM 44549 / YS-314 / AJ 12310 / JCM 11189 / NBRC 100395).